The chain runs to 261 residues: Oxidoreductase ptaF (261 aa).

It belongs to the avfA family.

It participates in secondary metabolite biosynthesis. Its function is as follows. Oxidoreductase; part of the gene cluster that mediates the biosynthesis of pestheic acid, a diphenyl ether which is a biosynthetic precursor of the unique chloropupukeananes. The biosynthesis initiates from condensation of acetate and malonate units catalyzed by the non-reducing PKS ptaA. As the ptaA protein is TE/CLC domain-deficient, hydrolysis and Claisen cyclization of the polyketide could be catalyzed by ptaB containing a beta-lactamase domain. The ptaB protein might hydrolyze the thioester bond between the ACP of ptaA and the intermediate to release atrochrysone carboxylic acid, which is spontaneously dehydrated to form endocrocin anthrone. Endocrocin anthrone is then converted to endocrocin, catalyzed by the anthrone oxygenase ptaC. Spontaneous decarboxylation of endocrocin occurs to generate emodin. An O-methyltransferase (ptaH or ptaI) could methylate emodin to form physcion. PtaJ could then catalyze the oxidative cleavage of physcion, and rotation of the intermediate could then afford desmethylisosulochrin. PtaF, a putative NADH-dependent oxidoreductase, might also participate in the oxidative cleavage step. Desmethylisosulochrin is then transformed by another O-methyltransferase (ptaH or ptaI) to form isosulochrin. Chlorination of isosulochrin by ptaM in the cyclohexadienone B ring then produces chloroisosulochrin. PtaE is responsible for the oxidative coupling reactions of both benzophenones isosulouchrin and chloroisosulochrin to RES-1214-1 and pestheic acid respectively, regardless of chlorination. The protein is Oxidoreductase ptaF of Pestalotiopsis fici (strain W106-1 / CGMCC3.15140).